The sequence spans 262 residues: 3-deoxy-manno-octulosonate cytidylyltransferase (262 aa).

This sequence belongs to the KdsB family.

The protein resides in the cytoplasm. The catalysed reaction is 3-deoxy-alpha-D-manno-oct-2-ulosonate + CTP = CMP-3-deoxy-beta-D-manno-octulosonate + diphosphate. The protein operates within nucleotide-sugar biosynthesis; CMP-3-deoxy-D-manno-octulosonate biosynthesis; CMP-3-deoxy-D-manno-octulosonate from 3-deoxy-D-manno-octulosonate and CTP: step 1/1. It functions in the pathway bacterial outer membrane biogenesis; lipopolysaccharide biosynthesis. Its function is as follows. Activates KDO (a required 8-carbon sugar) for incorporation into bacterial lipopolysaccharide in Gram-negative bacteria. The chain is 3-deoxy-manno-octulosonate cytidylyltransferase from Acidovorax sp. (strain JS42).